The following is a 219-amino-acid chain: Elongation factor Ts (219 aa).

The interval threonine 82 to valine 85 is involved in Mg(2+) ion dislocation from EF-Tu.

This sequence belongs to the EF-Ts family.

It localises to the cytoplasm. In terms of biological role, associates with the EF-Tu.GDP complex and induces the exchange of GDP to GTP. It remains bound to the aminoacyl-tRNA.EF-Tu.GTP complex up to the GTP hydrolysis stage on the ribosome. The polypeptide is Elongation factor Ts (Anaeromyxobacter dehalogenans (strain 2CP-C)).